The primary structure comprises 395 residues: S-adenosylmethionine synthase (395 aa).

His-18 is a binding site for ATP. Asp-20 contributes to the Mg(2+) binding site. Position 46 (Glu-46) interacts with K(+). Positions 59 and 103 each coordinate L-methionine. The tract at residues 103–113 (QSADIAVGVDS) is flexible loop. Residues 170 to 172 (DAK), 235 to 236 (KF), Asp-244, 250 to 251 (RK), Ala-267, and Lys-271 contribute to the ATP site. Position 244 (Asp-244) interacts with L-methionine. Position 275 (Lys-275) interacts with L-methionine.

The protein belongs to the AdoMet synthase family. Homotetramer; dimer of dimers. The cofactor is Mg(2+). It depends on K(+) as a cofactor.

The protein resides in the cytoplasm. The catalysed reaction is L-methionine + ATP + H2O = S-adenosyl-L-methionine + phosphate + diphosphate. It participates in amino-acid biosynthesis; S-adenosyl-L-methionine biosynthesis; S-adenosyl-L-methionine from L-methionine: step 1/1. Functionally, catalyzes the formation of S-adenosylmethionine (AdoMet) from methionine and ATP. The overall synthetic reaction is composed of two sequential steps, AdoMet formation and the subsequent tripolyphosphate hydrolysis which occurs prior to release of AdoMet from the enzyme. This is S-adenosylmethionine synthase from Granulibacter bethesdensis (strain ATCC BAA-1260 / CGDNIH1).